The chain runs to 776 residues: Photosystem I P700 chlorophyll a apoprotein A1 (776 aa).

The next 8 helical transmembrane spans lie at 76–99 (IFSAHFGHLAIVFIWLSGAFFHGA), 162–185 (LMALATGALIMAGLVLHGGIFHYH), 201–225 (LQHHQIGLFGLGSLGWTGHLIHVAN), 309–327 (VAHHHLAWAVFLMFGGHVY), 368–391 (WHAQLAVNLACIGSGSIVVAHHMY), 407–433 (LGLFTHHMWIGGLMICGAAAHAGIAVI), 455–477 (AIISHLNWVCMFLGFHSFGLYIH), and 557–575 (LMIHHIHAFTIHVTCLILL). The [4Fe-4S] cluster site is built by Cys599 and Cys608. Transmembrane regions (helical) follow at residues 615-636 (HVFLGLFWMYNSLSMVIFYFSW) and 690-712 (LSGYGLLFLGGHFVWAFSLMFLF). His701 lines the divinylchlorophyll a' pocket. The divinyl chlorophyll a site is built by Met709 and Tyr717. Position 718 (Trp718) interacts with phylloquinone. Residues 750–770 (AVGVTHFLFGGIVTTWAFFHA) traverse the membrane as a helical segment.

It belongs to the PsaA/PsaB family. In terms of assembly, the PsaA/B heterodimer binds the P700 divinyl chlorophyll special pair and subsequent electron acceptors. PSI consists of a core antenna complex that captures photons, and an electron transfer chain that converts photonic excitation into a charge separation. The cyanobacterial PSI reaction center is composed of one copy each of PsaA,B,C,D,E,F,I,J,K,L,M and X, and forms trimeric complexes. Requires PSI electron transfer chain: 5 divinyl chlorophyll a, 1 divinyl chlorophyll a', 2 phylloquinones and 3 4Fe-4S clusters. PSI core antenna: 90 divinyl chlorophyll a, 22 carotenoids, 3 phospholipids and 1 galactolipid. P700 is a divinyl chlorophyll a/divinyl chlorophyll a' dimer, A0 is one or more divinyl chlorophyll a, A1 is one or both phylloquinones and FX is a shared 4Fe-4S iron-sulfur center. as cofactor.

The protein resides in the cellular thylakoid membrane. The enzyme catalyses reduced [plastocyanin] + hnu + oxidized [2Fe-2S]-[ferredoxin] = oxidized [plastocyanin] + reduced [2Fe-2S]-[ferredoxin]. PsaA and PsaB bind P700, the primary electron donor of photosystem I (PSI), as well as the electron acceptors A0, A1 and FX. PSI is a plastocyanin/cytochrome c6-ferredoxin oxidoreductase, converting photonic excitation into a charge separation, which transfers an electron from the donor P700 chlorophyll pair to the spectroscopically characterized acceptors A0, A1, FX, FA and FB in turn. Oxidized P700 is reduced on the lumenal side of the thylakoid membrane by plastocyanin or cytochrome c6. This Prochlorococcus marinus (strain MIT 9303) protein is Photosystem I P700 chlorophyll a apoprotein A1.